Reading from the N-terminus, the 229-residue chain is Cytidylate kinase (229 aa).

An ATP-binding site is contributed by 12–20 (GPSGAGKGT).

The protein belongs to the cytidylate kinase family. Type 1 subfamily.

Its subcellular location is the cytoplasm. It catalyses the reaction CMP + ATP = CDP + ADP. The enzyme catalyses dCMP + ATP = dCDP + ADP. This is Cytidylate kinase from Pseudomonas aeruginosa (strain LESB58).